The following is a 160-amino-acid chain: MKLQVLPLSQEAFSAYGDVIETQQRDFFHINNGLVERYHDLALVEILEQDRTLISINRAQPANLPLTLHELERHPLGTQAFIPMKGEVFVVVVALGDDKPDLSTLRAFITNGEQGVNYHRNVWHHPLFAWQRVTDFLTIDRGGSDNCDVESIPEQELCFA.

It belongs to the ureidoglycolate lyase family. Homodimer. Requires Ni(2+) as cofactor.

It catalyses the reaction (S)-ureidoglycolate = urea + glyoxylate. The protein operates within nitrogen metabolism; (S)-allantoin degradation. Catalyzes the catabolism of the allantoin degradation intermediate (S)-ureidoglycolate, generating urea and glyoxylate. Involved in the anaerobic utilization of allantoin as sole nitrogen source. Reinforces the induction of genes involved in the degradation of allantoin and glyoxylate by producing glyoxylate. The sequence is that of Ureidoglycolate lyase from Escherichia coli (strain SMS-3-5 / SECEC).